Here is a 464-residue protein sequence, read N- to C-terminus: Soluble pyridine nucleotide transhydrogenase (464 aa).

Residue 35–44 coordinates FAD; it reads DSRRQVGGNC.

Belongs to the class-I pyridine nucleotide-disulfide oxidoreductase family. FAD serves as cofactor.

It localises to the cytoplasm. The catalysed reaction is NAD(+) + NADPH = NADH + NADP(+). Conversion of NADPH, generated by peripheral catabolic pathways, to NADH, which can enter the respiratory chain for energy generation. In Pseudomonas savastanoi pv. phaseolicola (strain 1448A / Race 6) (Pseudomonas syringae pv. phaseolicola (strain 1448A / Race 6)), this protein is Soluble pyridine nucleotide transhydrogenase.